The primary structure comprises 319 residues: Sphingomyelinase D (319 aa).

An N-terminal signal peptide occupies residues 1–23 (MTPLLRTICAILCILIAVPLTFA). Residue H44 is part of the active site. 3 residues coordinate Mg(2+): E64, D66, and D109. The SMD-tail signature appears at 312-319 (ATGADKPW).

The protein belongs to the sphingomyelinase D/phospholipase D family. Mg(2+) serves as cofactor.

The protein resides in the secreted. The catalysed reaction is a sphingomyelin + H2O = an N-acylsphing-4-enine 1-phosphate + choline + H(+). Functionally, catalyzes the hydrolysis of sphingomyelin. Sphingomyelinases D are produced by some spider in their venoms, but also by arthropods such as ticks, or pathogenic bacteria and fungi. They might play a role in pathogenicity through different mechanisms, such as membrane destabilization and host cell penetration, but also pulmonary inflammation and cutaneous lesions. The sequence is that of Sphingomyelinase D from Ajellomyces capsulatus (strain G186AR / H82 / ATCC MYA-2454 / RMSCC 2432) (Darling's disease fungus).